Consider the following 428-residue polypeptide: Beta-1,3-galactosyl-O-glycosyl-glycoprotein beta-1,6-N-acetylglucosaminyltransferase (428 aa).

Residues M1–R9 lie on the Cytoplasmic side of the membrane. Positions L5–R9 are mediates interaction with GOLPH3 and is necessary and sufficient for localization to the Golgi. Residues L10 to L32 form a helical; Signal-anchor for type II membrane protein membrane-spanning segment. The tract at residues R33–F121 is stem region. Topologically, residues R33–H428 are lumenal. N-linked (GlcNAc...) asparagine glycosylation is found at N58 and N95. Intrachain disulfides connect C59-C413, C100-C172, C151-C199, and C372-C381. A catalytic region spans residues P122–H428. UDP-N-acetyl-alpha-D-glucosamine is bound by residues V128 to H130, D155 to K157, and Y187. E243, N250, K251, R254, E320, K341, and Y358 together coordinate a glycoprotein. E320 functions as the Nucleophile in the catalytic mechanism. Residues R378 and K401 each coordinate UDP-N-acetyl-alpha-D-glucosamine.

The protein belongs to the glycosyltransferase 14 family. In terms of assembly, interacts with GOLPH3; may control GCNT1 retention in the Golgi. In terms of processing, N-glycosylated. In terms of tissue distribution, expressed in kidney, liver, stomach, spleen, lung and brain.

The protein resides in the golgi apparatus membrane. It catalyses the reaction a 3-O-[beta-D-galactosyl-(1-&gt;3)-N-acetyl-alpha-D-galactosaminyl]-L-seryl-[protein] + UDP-N-acetyl-alpha-D-glucosamine = 3-O-{beta-D-galactosyl-(1-&gt;3)-[N-acetyl-beta-D-glucosaminyl-(1-&gt;6)]-N-acetyl-alpha-D-galactosaminyl}-L-seryl-[protein] + UDP + H(+). The enzyme catalyses a 3-O-[beta-D-galactosyl-(1-&gt;3)-N-acetyl-alpha-D-galactosaminyl]-L-threonyl-[protein] + UDP-N-acetyl-alpha-D-glucosamine = a 3-O-{beta-D-galactosyl-(1-&gt;3)-[N-acetyl-beta-D-glucosaminyl-(1-&gt;6)]-N-acetyl-alpha-D-galactosaminyl}-L-threonyl-[protein] + UDP + H(+). The catalysed reaction is a globoside GalGb4Cer + UDP-N-acetyl-alpha-D-glucosamine = a globoside GlcNAc-(beta1-&gt;6)-GalGb4Cer + UDP + H(+). It carries out the reaction a ganglioside GA1 + UDP-N-acetyl-alpha-D-glucosamine = a ganglioside beta-D-GlcNAc-(1-&gt;6)-GA1 + UDP + H(+). Its pathway is protein modification; protein glycosylation. The protein operates within glycolipid biosynthesis. Inactivated by thiol-reactive agents. Inhibited by free UDP. Functionally, glycosyltransferase that catalyzes the transfer of an N-acetylglucosamine (GlcNAc) moiety in beta1-6 linkage from UDP-GlcNAc onto mucin-type core 1 O-glycan to form the branched mucin-type core 2 O-glycan. The catalysis is metal ion-independent and occurs with inversion of the anomeric configuration of sugar donor. Selectively involved in synthesis of mucin-type core 2 O-glycans that serve as scaffolds for the display of selectin ligand sialyl Lewis X epitope by myeloid cells, with an impact on homeostasis and recruitment to inflammatory sites. Can also act on glycolipid substrates. Transfers GlcNAc moiety to GalGb4Cer globosides in a reaction step to the synthesis of stage-specific embryonic antigen 1 (SSEA-1) determinant. Can use Galbeta1-3GalNAcalpha1-R and Galbeta1-3GalNAcbeta1-R oligosaccharide derivatives as acceptor substrates. The polypeptide is Beta-1,3-galactosyl-O-glycosyl-glycoprotein beta-1,6-N-acetylglucosaminyltransferase (Gcnt1) (Mus musculus (Mouse)).